The sequence spans 467 residues: Variant surface glycoprotein 7 (467 aa).

A compositionally biased stretch (polar residues) spans 77–87 (TIAAGATNTKL). The tract at residues 77–133 (TIAAGATNTKLSGHHPNQGRRGRRRSSSARPNNSKGNSPSKRAGGAVRGETPASGRL) is disordered. Over residues 93 to 103 (NQGRRGRRRSS) the composition is skewed to basic residues. Residues 107–116 (PNNSKGNSPS) are compositionally biased toward polar residues. 2 N-linked (GlcNAc...) asparagine glycosylation sites follow: Asn108 and Asn252. The tract at residues 382-407 (AEKVENPRSQGNPETAENKKEGGNTA) is disordered. Residue Asn416 is glycosylated (N-linked (GlcNAc...) asparagine). Asp444 carries the GPI-anchor amidated aspartate lipid modification. A propeptide spans 445 to 467 (SSFLLSKQFALSVVSAAFAALLF) (removed in mature form).

The protein localises to the cell membrane. Functionally, VSG forms a coat on the surface of the parasite. The trypanosome evades the immune response of the host by expressing a series of antigenically distinct VSGs from an estimated 1000 VSG genes. The chain is Variant surface glycoprotein 7 from Trypanosoma brucei rhodesiense.